The primary structure comprises 96 residues: Co-chaperonin GroES (96 aa).

It belongs to the GroES chaperonin family. In terms of assembly, heptamer of 7 subunits arranged in a ring. Interacts with the chaperonin GroEL.

Its subcellular location is the cytoplasm. Functionally, together with the chaperonin GroEL, plays an essential role in assisting protein folding. The GroEL-GroES system forms a nano-cage that allows encapsulation of the non-native substrate proteins and provides a physical environment optimized to promote and accelerate protein folding. GroES binds to the apical surface of the GroEL ring, thereby capping the opening of the GroEL channel. The chain is Co-chaperonin GroES from Shewanella piezotolerans (strain WP3 / JCM 13877).